We begin with the raw amino-acid sequence, 560 residues long: Dihydroxy-acid dehydratase (560 aa).

Cysteine 50 is a binding site for [2Fe-2S] cluster. Position 82 (aspartate 82) interacts with Mg(2+). Cysteine 123 contacts [2Fe-2S] cluster. Mg(2+)-binding residues include aspartate 124 and lysine 125. The residue at position 125 (lysine 125) is an N6-carboxylysine. Cysteine 195 provides a ligand contact to [2Fe-2S] cluster. Residue glutamate 447 coordinates Mg(2+). The active-site Proton acceptor is serine 473.

Belongs to the IlvD/Edd family. As to quaternary structure, homodimer. [2Fe-2S] cluster serves as cofactor. The cofactor is Mg(2+).

It carries out the reaction (2R)-2,3-dihydroxy-3-methylbutanoate = 3-methyl-2-oxobutanoate + H2O. The catalysed reaction is (2R,3R)-2,3-dihydroxy-3-methylpentanoate = (S)-3-methyl-2-oxopentanoate + H2O. Its pathway is amino-acid biosynthesis; L-isoleucine biosynthesis; L-isoleucine from 2-oxobutanoate: step 3/4. It functions in the pathway amino-acid biosynthesis; L-valine biosynthesis; L-valine from pyruvate: step 3/4. Functions in the biosynthesis of branched-chain amino acids. Catalyzes the dehydration of (2R,3R)-2,3-dihydroxy-3-methylpentanoate (2,3-dihydroxy-3-methylvalerate) into 2-oxo-3-methylpentanoate (2-oxo-3-methylvalerate) and of (2R)-2,3-dihydroxy-3-methylbutanoate (2,3-dihydroxyisovalerate) into 2-oxo-3-methylbutanoate (2-oxoisovalerate), the penultimate precursor to L-isoleucine and L-valine, respectively. This chain is Dihydroxy-acid dehydratase, found in Methylibium petroleiphilum (strain ATCC BAA-1232 / LMG 22953 / PM1).